The following is a 425-amino-acid chain: Dihydroorotase (425 aa).

Zn(2+) is bound by residues H56 and H58. Substrate-binding positions include 58 to 60 and N90; that span reads HYR. Positions 148, 175, and 228 each coordinate Zn(2+). Substrate is bound at residue N274. D301 contributes to the Zn(2+) binding site. D301 is an active-site residue. Substrate-binding positions include H305 and 319 to 320; that span reads FG.

This sequence belongs to the metallo-dependent hydrolases superfamily. DHOase family. Class I DHOase subfamily. Zn(2+) serves as cofactor.

It carries out the reaction (S)-dihydroorotate + H2O = N-carbamoyl-L-aspartate + H(+). Its pathway is pyrimidine metabolism; UMP biosynthesis via de novo pathway; (S)-dihydroorotate from bicarbonate: step 3/3. Catalyzes the reversible cyclization of carbamoyl aspartate to dihydroorotate. The sequence is that of Dihydroorotase from Lactobacillus delbrueckii subsp. bulgaricus (strain ATCC BAA-365 / Lb-18).